Here is a 356-residue protein sequence, read N- to C-terminus: DNA polymerase IV (356 aa).

Residues 6 to 187 (IIHVDMDYFF…LDIGDFPGVG (182 aa)) enclose the UmuC domain. Positions 10 and 105 each coordinate Mg(2+). Glutamate 106 is a catalytic residue.

This sequence belongs to the DNA polymerase type-Y family. In terms of assembly, monomer. It depends on Mg(2+) as a cofactor.

The protein resides in the cytoplasm. The enzyme catalyses DNA(n) + a 2'-deoxyribonucleoside 5'-triphosphate = DNA(n+1) + diphosphate. Poorly processive, error-prone DNA polymerase involved in untargeted mutagenesis. Copies undamaged DNA at stalled replication forks, which arise in vivo from mismatched or misaligned primer ends. These misaligned primers can be extended by PolIV. Exhibits no 3'-5' exonuclease (proofreading) activity. May be involved in translesional synthesis, in conjunction with the beta clamp from PolIII. The polypeptide is DNA polymerase IV (Staphylococcus saprophyticus subsp. saprophyticus (strain ATCC 15305 / DSM 20229 / NCIMB 8711 / NCTC 7292 / S-41)).